Reading from the N-terminus, the 299-residue chain is Probable tyrosine phosphatase protein J4 (299 aa).

Residues 16 to 289 (VEALDFLSFM…VYCYQALYVW (274 aa)) enclose the Tyrosine-protein phosphatase domain. Cysteine 230 (phosphocysteine intermediate) is an active-site residue.

It belongs to the protein-tyrosine phosphatase family.

It carries out the reaction O-phospho-L-tyrosyl-[protein] + H2O = L-tyrosyl-[protein] + phosphate. The chain is Probable tyrosine phosphatase protein J4 (J5) from Microplitis demolitor bracovirus (isolate Webb) (MdBV).